We begin with the raw amino-acid sequence, 553 residues long: Membrane protein insertase YidC (553 aa).

The helical transmembrane segment at 3–23 (IKRTILWVIFSLSVVLLFDNW) threads the bilayer. The disordered stretch occupies residues 44-64 (AAAPGGTPAGDVPKAAAPAAA). A run of 4 helical transmembrane segments spans residues 359–379 (LLGNWGWSIVALTVLVKLVFF), 429–449 (LGGCLPIVIQIPVFIALYWVL), 467–487 (LASPDPFYILPILMAVSMFVQ), and 507–527 (PIAFSVMFFFFPAGLVLYWVV).

The protein belongs to the OXA1/ALB3/YidC family. Type 1 subfamily. In terms of assembly, interacts with the Sec translocase complex via SecD. Specifically interacts with transmembrane segments of nascent integral membrane proteins during membrane integration.

It localises to the cell inner membrane. In terms of biological role, required for the insertion and/or proper folding and/or complex formation of integral membrane proteins into the membrane. Involved in integration of membrane proteins that insert both dependently and independently of the Sec translocase complex, as well as at least some lipoproteins. Aids folding of multispanning membrane proteins. This chain is Membrane protein insertase YidC, found in Ralstonia nicotianae (strain ATCC BAA-1114 / GMI1000) (Ralstonia solanacearum).